The primary structure comprises 121 residues: DLWQWGQMILKETGKIPFSYYGAYGCYCGWGGRGGKPKAGTDRCCYVHDCCYGKLTSCPKTDDRYSYSRLDLTIVCGEDDPCKELCECDKKIAVCFRENLGTYNKKYRYHLKSCKKADKPC.

7 disulfide bridges follow: Cys-26–Cys-114, Cys-28–Cys-45, Cys-44–Cys-95, Cys-50–Cys-121, Cys-51–Cys-88, Cys-58–Cys-82, and Cys-76–Cys-86. Ca(2+) contacts are provided by Tyr-27, Gly-29, and Gly-31. Residue His-48 is part of the active site. Asp-49 lines the Ca(2+) pocket. Asp-89 is a catalytic residue.

Ca(2+) serves as cofactor. Expressed by the venom gland.

The protein localises to the secreted. It carries out the reaction a 1,2-diacyl-sn-glycero-3-phosphocholine + H2O = a 1-acyl-sn-glycero-3-phosphocholine + a fatty acid + H(+). Its function is as follows. Snake venom phospholipase A2 (PLA2) that induces blockade of neuromuscular contraction in an indirectly stimulated chick biventer cervicis nerve-muscle preparation. Does not inhibit contraction of chick biventer cervicic nerve-muscle preparation in response to treatment with acetylcholine or KCl. The neuromuscular blockade is mediated by inhibitory action at the presynaptic motor nerve endings. Lyses skeletal myoblasts and myotubes in vitro, and intramuscular injection causes local muscle necrosis. Induces edema in the mouse foot pad. Induces a transient increase of IL-6 levels. PLA2 catalyzes the calcium-dependent hydrolysis of the 2-acyl groups in 3-sn-phosphoglycerides. This chain is Basic phospholipase A2 BmjeTX-II, found in Bothrops marajoensis (Marajo lancehead).